The chain runs to 482 residues: Ras GTPase-activating protein-binding protein 2 (482 aa).

The region spanning 11 to 133 is the NTF2 domain; the sequence is VGREFVRQYY…FYVHNDMFRY (123 aa). The span at 140-158 shows a compositional bias: acidic residues; sequence DSEPELDEESEDEVEEEQE. Disordered stretches follow at residues 140–171 and 187–318; these read DSEP…QENA and EPLE…EQND. Ser141, Ser149, and Ser225 each carry phosphoserine. The segment at 142–220 is acidic disordered region; that stretch reads EPELDEESED…PQVEEKNLEE (79 aa). The span at 191-225 shows a compositional bias: basic and acidic residues; that stretch reads ESSHEPEPEPESETKTEELKPQVEEKNLEELEEKS. Thr227 carries the phosphothreonine modification. Ser235 bears the Phosphoserine mark. Polar residues predominate over residues 247–264; it reads ASVTSKNLPPSGTVSSSG. A Glycyl lysine isopeptide (Lys-Gly) (interchain with G-Cter in SUMO2) cross-link involves residue Lys281. Residues 290-300 show a composition bias toward basic and acidic residues; that stretch reads RVREQRPRERP. Positions 331–409 constitute an RRM domain; that stretch reads HQLFVGNLPH…VRLNVEEKKT (79 aa). N6-succinyllysine is present on Lys392. The segment at 404–476 is RG-rich region; it reads VEEKKTRAAR…GRGTGQMEGR (73 aa). Over residues 408-432 the composition is skewed to basic and acidic residues; it reads KTRAARERETRGGGDDRRDIRRNDR. A disordered region spans residues 408–482; sequence KTRAARERET…MEGRFTGQRR (75 aa). The span at 433 to 445 shows a compositional bias: gly residues; sequence GPGGPRGIVGGGM. Arg457 is modified (omega-N-methylarginine). Ser466 carries the phosphoserine modification. Arg468 is modified (omega-N-methylarginine).

Forms homooligomers. Forms heterodimers with G3BP1. Interacts with NFKBIA (via N-terminus). Interacts (via NTF2 domain) with USP10; inhibiting stress granule formation. Interacts (via NTF2 domain) with CAPRIN1; promoting stress granule formation. Associates (via RG-rich region) with 40S ribosome subunits. Interacts with PABPC1. In terms of assembly, (Microbial infection) Interacts with non-structural protein 3 (via C-terminus) of Sindbis virus and Semliki forest virus; this interaction inhibits the formation of host stress granules on viral mRNAs and the nsp3-G3BP2 complexes bind viral RNAs and probably orchestrate the assembly of viral replication complexes. Post-translationally, (Microbial infection) Cleaved by foot-and-mouth disease virus leader protease; this cleavage suppresses the formation of cytoplasmic stress granules.

It localises to the cytoplasm. The protein resides in the stress granule. With respect to regulation, under physiological conditions, G3BP2 adopts a compact state that is stabilized by intramolecular interactions between the RG-rich and the acidic regions that inhibit phase separation. Upon stress, polysomes disassemble and mRNAs are released in an unfolded protein-free state. Binding of unfolded mRNA to G3BP2 outcompetes the intramolecular interactions and RNA-bound G3BP2 adopts an expanded conformation in which the RG-rich region becomes exposed to engage in protein-protein and protein-RNA interactions, allowing physical cross-linking of RNA molecules to form protein-RNA condensates, leading to liquid-liquid phase separation (LLPS). Its function is as follows. Scaffold protein that plays an essential role in cytoplasmic stress granule formation which acts as a platform for antiviral signaling. Plays an essential role in stress granule formation. Stress granules are membraneless compartments that store mRNAs and proteins, such as stalled translation pre-initiation complexes, in response to stress. Promotes formation of stress granules phase-separated membraneless compartment by undergoing liquid-liquid phase separation (LLPS) upon unfolded RNA-binding: functions as a molecular switch that triggers RNA-dependent LLPS in response to a rise in intracellular free RNA concentrations. The sequence is that of Ras GTPase-activating protein-binding protein 2 from Homo sapiens (Human).